Reading from the N-terminus, the 353-residue chain is Methylthioribose-1-phosphate isomerase (353 aa).

Residues 51–53 (RGA), Arg-94, and Gln-199 contribute to the substrate site. The Proton donor role is filled by Asp-240. 250-251 (NK) contributes to the substrate binding site.

It belongs to the eIF-2B alpha/beta/delta subunits family. MtnA subfamily. As to quaternary structure, homodimer.

The enzyme catalyses 5-(methylsulfanyl)-alpha-D-ribose 1-phosphate = 5-(methylsulfanyl)-D-ribulose 1-phosphate. Its pathway is amino-acid biosynthesis; L-methionine biosynthesis via salvage pathway; L-methionine from S-methyl-5-thio-alpha-D-ribose 1-phosphate: step 1/6. Catalyzes the interconversion of methylthioribose-1-phosphate (MTR-1-P) into methylthioribulose-1-phosphate (MTRu-1-P). This chain is Methylthioribose-1-phosphate isomerase, found in Bacillus velezensis (strain DSM 23117 / BGSC 10A6 / LMG 26770 / FZB42) (Bacillus amyloliquefaciens subsp. plantarum).